The sequence spans 213 residues: Holliday junction branch migration complex subunit RuvA (213 aa).

Positions 1 to 69 (MISYLKGIVA…EEIPLLYGFS (69 aa)) are domain I. The interval 70 to 148 (SPAERDLFRH…EWRKSAGFFV (79 aa)) is domain II. Positions 149-158 (ATEGPAPGIL) are flexible linker. Residues 158–213 (LEEVQMTLFALGYTAHEVSHALHVVSEDIGLPKDAYVEDWIKQAIAHLSSSEQVSH) are domain III.

Belongs to the RuvA family. In terms of assembly, homotetramer. Forms an RuvA(8)-RuvB(12)-Holliday junction (HJ) complex. HJ DNA is sandwiched between 2 RuvA tetramers; dsDNA enters through RuvA and exits via RuvB. An RuvB hexamer assembles on each DNA strand where it exits the tetramer. Each RuvB hexamer is contacted by two RuvA subunits (via domain III) on 2 adjacent RuvB subunits; this complex drives branch migration. In the full resolvosome a probable DNA-RuvA(4)-RuvB(12)-RuvC(2) complex forms which resolves the HJ.

It localises to the cytoplasm. The RuvA-RuvB-RuvC complex processes Holliday junction (HJ) DNA during genetic recombination and DNA repair, while the RuvA-RuvB complex plays an important role in the rescue of blocked DNA replication forks via replication fork reversal (RFR). RuvA specifically binds to HJ cruciform DNA, conferring on it an open structure. The RuvB hexamer acts as an ATP-dependent pump, pulling dsDNA into and through the RuvAB complex. HJ branch migration allows RuvC to scan DNA until it finds its consensus sequence, where it cleaves and resolves the cruciform DNA. This Nostoc sp. (strain PCC 7120 / SAG 25.82 / UTEX 2576) protein is Holliday junction branch migration complex subunit RuvA.